Here is a 262-residue protein sequence, read N- to C-terminus: Phosphate import ATP-binding protein PstB (262 aa).

The 242-residue stretch at 16–257 (IDVRNLNFYY…PHRKETEDYI (242 aa)) folds into the ABC transporter domain. 48–55 (GPSGCGKS) is a binding site for ATP.

The protein belongs to the ABC transporter superfamily. Phosphate importer (TC 3.A.1.7) family. The complex is composed of two ATP-binding proteins (PstB), two transmembrane proteins (PstC and PstA) and a solute-binding protein (PstS).

The protein resides in the cell inner membrane. The catalysed reaction is phosphate(out) + ATP + H2O = ADP + 2 phosphate(in) + H(+). In terms of biological role, part of the ABC transporter complex PstSACB involved in phosphate import. Responsible for energy coupling to the transport system. This is Phosphate import ATP-binding protein PstB from Cupriavidus metallidurans (strain ATCC 43123 / DSM 2839 / NBRC 102507 / CH34) (Ralstonia metallidurans).